A 267-amino-acid chain; its full sequence is Cytochrome b (267 aa).

4 helical membrane passes run 33 to 53 (FGSLLGICLMIQILTGLFLAM), 77 to 98 (WLIRYLHANGASMFFICLFIHV), 113 to 133 (WNIGIILFLTTMATAFVGYVL), and 178 to 198 (FFAFHFILPFIITAFVLVHLL). Positions 83 and 97 each coordinate heme b. Residues H182 and H196 each coordinate heme b. H201 provides a ligand contact to a ubiquinone. The helical transmembrane segment at 226–246 (IKDLLGVILLLMVLMILVLFF) threads the bilayer.

This sequence belongs to the cytochrome b family. In terms of assembly, the cytochrome bc1 complex contains 11 subunits: 3 respiratory subunits (MT-CYB, CYC1 and UQCRFS1), 2 core proteins (UQCRC1 and UQCRC2) and 6 low-molecular weight proteins (UQCRH/QCR6, UQCRB/QCR7, UQCRQ/QCR8, UQCR10/QCR9, UQCR11/QCR10 and a cleavage product of UQCRFS1). This cytochrome bc1 complex then forms a dimer. Heme b is required as a cofactor.

Its subcellular location is the mitochondrion inner membrane. Its function is as follows. Component of the ubiquinol-cytochrome c reductase complex (complex III or cytochrome b-c1 complex) that is part of the mitochondrial respiratory chain. The b-c1 complex mediates electron transfer from ubiquinol to cytochrome c. Contributes to the generation of a proton gradient across the mitochondrial membrane that is then used for ATP synthesis. The polypeptide is Cytochrome b (MT-CYB) (Abrothrix olivaceus (Olive grass mouse)).